A 196-amino-acid polypeptide reads, in one-letter code: Ribosome maturation factor RimP (196 aa).

This sequence belongs to the RimP family.

The protein resides in the cytoplasm. Its function is as follows. Required for maturation of 30S ribosomal subunits. The protein is Ribosome maturation factor RimP of Lawsonia intracellularis (strain PHE/MN1-00).